A 434-amino-acid polypeptide reads, in one-letter code: Adenylosuccinate synthetase (434 aa).

GTP is bound by residues 22 to 28 (GDEGKGK) and 50 to 52 (GHT). The active-site Proton acceptor is D23. Residues D23 and G50 each contribute to the Mg(2+) site. IMP-binding positions include 23 to 26 (DEGK), 48 to 51 (NAGH), T139, R153, Q234, T249, and R313. Residue H51 is the Proton donor of the active site. 309-315 (ATTGRKR) provides a ligand contact to substrate. Residues R315, 341–343 (KLD), and 423–425 (SVG) contribute to the GTP site.

It belongs to the adenylosuccinate synthetase family. Homodimer. Mg(2+) serves as cofactor.

It is found in the cytoplasm. The enzyme catalyses IMP + L-aspartate + GTP = N(6)-(1,2-dicarboxyethyl)-AMP + GDP + phosphate + 2 H(+). The protein operates within purine metabolism; AMP biosynthesis via de novo pathway; AMP from IMP: step 1/2. Its function is as follows. Plays an important role in the de novo pathway of purine nucleotide biosynthesis. Catalyzes the first committed step in the biosynthesis of AMP from IMP. The protein is Adenylosuccinate synthetase of Pelodictyon phaeoclathratiforme (strain DSM 5477 / BU-1).